A 497-amino-acid polypeptide reads, in one-letter code: tRNA-2-methylthio-N(6)-dimethylallyladenosine synthase (497 aa).

The segment at 1–50 (MTGTSNIPTHGKEHKDAPALLPLPAPNPHHTHAAHPGNPSHDRPPSRGKL) is disordered. Residues 48–165 (GKLFIKTHGC…LPDMIRARRE (118 aa)) enclose the MTTase N-terminal domain. C57, C94, C128, C202, C206, and C209 together coordinate [4Fe-4S] cluster. Positions 188-430 (RAEGPSAFVS…QKHINTYAAD (243 aa)) constitute a Radical SAM core domain. The region spanning 433–496 (KRMIGTVQTV…SNSLRGRVHT (64 aa)) is the TRAM domain.

The protein belongs to the methylthiotransferase family. MiaB subfamily. In terms of assembly, monomer. Requires [4Fe-4S] cluster as cofactor.

The protein localises to the cytoplasm. The enzyme catalyses N(6)-dimethylallyladenosine(37) in tRNA + (sulfur carrier)-SH + AH2 + 2 S-adenosyl-L-methionine = 2-methylsulfanyl-N(6)-dimethylallyladenosine(37) in tRNA + (sulfur carrier)-H + 5'-deoxyadenosine + L-methionine + A + S-adenosyl-L-homocysteine + 2 H(+). Functionally, catalyzes the methylthiolation of N6-(dimethylallyl)adenosine (i(6)A), leading to the formation of 2-methylthio-N6-(dimethylallyl)adenosine (ms(2)i(6)A) at position 37 in tRNAs that read codons beginning with uridine. This Xylella fastidiosa (strain 9a5c) protein is tRNA-2-methylthio-N(6)-dimethylallyladenosine synthase.